An 88-amino-acid chain; its full sequence is Acyl-CoA-binding domain-containing protein 7 (88 aa).

The ACB domain occupies 3-88 (LQADFDQAAQ…ARELIEKYGI (86 aa)). Residues Arg15, 30-34 (YGLYK), Lys56, and Tyr75 contribute to the an acyl-CoA site.

This sequence belongs to the ACBD7 family.

Functionally, binds medium- and long-chain acyl-CoA esters. This Mus musculus (Mouse) protein is Acyl-CoA-binding domain-containing protein 7 (Acbd7).